The chain runs to 147 residues: Ribonuclease 4 (147 aa).

The N-terminal stretch at M1 to G28 is a signal peptide. The residue at position 29 (Q29) is a Pyrrolidone carboxylic acid. The dUMP site is built by R35, H40, K68, N71, and T72. The active-site Proton acceptor is the H40. 4 cysteine pairs are disulfide-bonded: C53/C109, C67/C120, C85/C135, and C92/C99. Catalysis depends on H144, which acts as the Proton donor. F145 lines the dUMP pocket.

The protein belongs to the pancreatic ribonuclease family.

It localises to the secreted. Functionally, cleaves preferentially after uridine bases. Has antimicrobial activity against uropathogenic E.coli (UPEC). Probably contributes to urinary tract sterility. In Pan troglodytes (Chimpanzee), this protein is Ribonuclease 4 (RNASE4).